Here is a 2207-residue protein sequence, read N- to C-terminus: Mediator of RNA polymerase II transcription subunit 13-like (2207 aa).

Residues 337–355 (VQSAASHLGSQDGGMSTMH) show a composition bias toward polar residues. 4 disordered regions span residues 337-368 (VQSA…PKLH), 384-403 (AQSK…AAHS), 431-479 (VGPS…KRPL), and 519-574 (KYDK…VPVN). A compositionally biased stretch (basic residues) spans 356–368 (SPKRSRKTPPKLH). Polar residues predominate over residues 384–394 (AQSKRSQMSTP). The segment covering 442-453 (PGFSAGLPSSSS) has biased composition (low complexity). Residues 463-475 (KTTERQEKGDKLQ) are compositionally biased toward basic and acidic residues. Residues 528 to 539 (SRNTSKQMNLNP) show a composition bias toward polar residues. Over residues 546–555 (PISPLPPTLS) the composition is skewed to pro residues. A phosphoserine mark is found at Ser548 and Ser555. Residues 664–668 (LQRLL) carry the LXXLL motif 1 motif. A compositionally biased stretch (basic and acidic residues) spans 731–747 (GTEKDSLKKNKSEDGFG). The interval 731 to 767 (GTEKDSLKKNKSEDGFGTKDVTTPGHSTPVPDGKNAM) is disordered. 2 positions are modified to phosphoserine: Ser812 and Ser821. A disordered region spans residues 816–847 (ELGAVSPALRSSKMPTVGTEERPPGKDGRAAG). A compositionally biased stretch (basic and acidic residues) spans 834 to 844 (TEERPPGKDGR). Ser918 is modified (phosphoserine). The tract at residues 1004–1091 (DPDYVNTPQM…STTRPLNSVE (88 aa)) is disordered. Polar residues predominate over residues 1009 to 1019 (NTPQMNTPVTL). Over residues 1020-1031 (NSAAPASNSGAG) the composition is skewed to low complexity. The span at 1072-1087 (TDQGSPASTPSTTRPL) shows a compositional bias: polar residues. Residues 1224–1228 (LLLLL) carry the LXXLL motif 2 motif. Residues 1379 to 1400 (LPIPTLLVGYDKEFLTISPFSL) are leucine-zipper. Disordered stretches follow at residues 1523 to 1652 (LMPP…SVTE) and 2042 to 2077 (GNLH…QGER). Residues 1541-1593 (PGNAGSLPSNSGSGAPPAGSAFNPTSSSSANPTTSSSSASSGPPGSSAASAPG) show a composition bias toward low complexity. Polar residues-rich tracts occupy residues 1612–1624 (QNPS…TDRT) and 1635–1649 (PGQS…GQDS). Ser2080 is modified (phosphoserine).

It belongs to the Mediator complex subunit 13 family. As to quaternary structure, component of the Mediator complex, which is composed of MED1, MED4, MED6, MED7, MED8, MED9, MED10, MED11, MED12, MED13, MED13L, MED14, MED15, MED16, MED17, MED18, MED19, MED20, MED21, MED22, MED23, MED24, MED25, MED26, MED27, MED29, MED30, MED31, CCNC, CDK8 and CDC2L6/CDK11. The MED12, MED13, CCNC and CDK8 subunits form a distinct module termed the CDK8 module. Mediator containing the CDK8 module is less active than Mediator lacking this module in supporting transcriptional activation. Individual preparations of the Mediator complex lacking one or more distinct subunits have been variously termed ARC, CRSP, DRIP, PC2, SMCC and TRAP. As to expression, highly expressed in heart and weakly expressed in brain, spleen, lung, liver, kidney and testis.

It is found in the nucleus. Component of the Mediator complex, a coactivator involved in the regulated transcription of nearly all RNA polymerase II-dependent genes. Mediator functions as a bridge to convey information from gene-specific regulatory proteins to the basal RNA polymerase II transcription machinery. Mediator is recruited to promoters by direct interactions with regulatory proteins and serves as a scaffold for the assembly of a functional preinitiation complex with RNA polymerase II and the general transcription factors. This subunit may specifically regulate transcription of targets of the Wnt signaling pathway and SHH signaling pathway. This chain is Mediator of RNA polymerase II transcription subunit 13-like (Med13l), found in Mus musculus (Mouse).